A 55-amino-acid chain; its full sequence is MSTSRKLKTHGMRRGKNRAPHKGVKRGGSKRKYRKSSLKSRKRGDDASRNYRSHL.

Basic residues predominate over residues 1-42; sequence MSTSRKLKTHGMRRGKNRAPHKGVKRGGSKRKYRKSSLKSRK. The tract at residues 1–55 is disordered; sequence MSTSRKLKTHGMRRGKNRAPHKGVKRGGSKRKYRKSSLKSRKRGDDASRNYRSHL. Residues Ser36, Ser37, and Ser40 each carry the phosphoserine modification.

Belongs to the nuclear transition protein 1 family. In terms of tissue distribution, testis.

The protein localises to the nucleus. It is found in the chromosome. Its function is as follows. Plays a key role in the replacement of histones to protamine in the elongating spermatids of mammals. In condensing spermatids, loaded onto the nucleosomes, where it promotes the recruitment and processing of protamines, which are responsible for histone eviction. The chain is Spermatid nuclear transition protein 1 (Tnp1) from Rattus norvegicus (Rat).